A 399-amino-acid polypeptide reads, in one-letter code: 1-deoxy-D-xylulose 5-phosphate reductoisomerase (399 aa).

Thr-16, Gly-17, Ser-18, Ile-19, Gly-42, Arg-43, Asn-44, and Asn-127 together coordinate NADPH. Lys-128 serves as a coordination point for 1-deoxy-D-xylulose 5-phosphate. Residue Glu-129 coordinates NADPH. Mn(2+) is bound at residue Asp-153. Residues Ser-154, Glu-155, Ser-179, and His-202 each coordinate 1-deoxy-D-xylulose 5-phosphate. Glu-155 contacts Mn(2+). An NADPH-binding site is contributed by Gly-208. 1-deoxy-D-xylulose 5-phosphate-binding residues include Ser-215, Asn-220, Lys-221, and Glu-224. Glu-224 lines the Mn(2+) pocket.

Belongs to the DXR family. Requires Mg(2+) as cofactor. Mn(2+) is required as a cofactor.

It catalyses the reaction 2-C-methyl-D-erythritol 4-phosphate + NADP(+) = 1-deoxy-D-xylulose 5-phosphate + NADPH + H(+). The protein operates within isoprenoid biosynthesis; isopentenyl diphosphate biosynthesis via DXP pathway; isopentenyl diphosphate from 1-deoxy-D-xylulose 5-phosphate: step 1/6. Its function is as follows. Catalyzes the NADPH-dependent rearrangement and reduction of 1-deoxy-D-xylulose-5-phosphate (DXP) to 2-C-methyl-D-erythritol 4-phosphate (MEP). This Caulobacter vibrioides (strain NA1000 / CB15N) (Caulobacter crescentus) protein is 1-deoxy-D-xylulose 5-phosphate reductoisomerase.